The primary structure comprises 131 residues: Large ribosomal subunit protein bL17 (131 aa).

It belongs to the bacterial ribosomal protein bL17 family. Part of the 50S ribosomal subunit. Contacts protein L32.

The protein is Large ribosomal subunit protein bL17 of Azoarcus sp. (strain BH72).